The following is a 323-amino-acid chain: Beta-ketoacyl-[acyl-carrier-protein] synthase III (323 aa).

Catalysis depends on residues C113 and H250. Residues 251-255 (QANRR) form an ACP-binding region. N280 is an active-site residue.

The protein belongs to the thiolase-like superfamily. FabH family. Homodimer.

The protein resides in the cytoplasm. It catalyses the reaction malonyl-[ACP] + acetyl-CoA + H(+) = 3-oxobutanoyl-[ACP] + CO2 + CoA. It functions in the pathway lipid metabolism; fatty acid biosynthesis. Functionally, catalyzes the condensation reaction of fatty acid synthesis by the addition to an acyl acceptor of two carbons from malonyl-ACP. Catalyzes the first condensation reaction which initiates fatty acid synthesis and may therefore play a role in governing the total rate of fatty acid production. Possesses both acetoacetyl-ACP synthase and acetyl transacylase activities. Its substrate specificity determines the biosynthesis of branched-chain and/or straight-chain of fatty acids. The polypeptide is Beta-ketoacyl-[acyl-carrier-protein] synthase III (Rhizobium rhizogenes (strain K84 / ATCC BAA-868) (Agrobacterium radiobacter)).